A 553-amino-acid chain; its full sequence is Arginine--tRNA ligase (553 aa).

Residues 130–140 (ANPTGDLHIGH) carry the 'HIGH' region motif.

The protein belongs to the class-I aminoacyl-tRNA synthetase family. In terms of assembly, monomer.

It is found in the cytoplasm. The catalysed reaction is tRNA(Arg) + L-arginine + ATP = L-arginyl-tRNA(Arg) + AMP + diphosphate. The polypeptide is Arginine--tRNA ligase (Staphylococcus epidermidis (strain ATCC 12228 / FDA PCI 1200)).